A 910-amino-acid chain; its full sequence is UPF0182 protein Acid_6445 (910 aa).

A run of 7 helical transmembrane segments spans residues 17–37, 56–76, 101–121, 157–177, 210–229, 252–272, and 276–296; these read ITLL…AGYA, LYYG…ALWI, LALL…WTVV, LLRS…WIAA, FLRG…FYLG, IGLP…AFVA, and WFLA…PRIV.

The protein belongs to the UPF0182 family.

Its subcellular location is the cell membrane. The protein is UPF0182 protein Acid_6445 of Solibacter usitatus (strain Ellin6076).